The primary structure comprises 156 residues: Large ribosomal subunit protein uL15 (156 aa).

A disordered region spans residues R25–V48. The segment covering T34 to K43 has biased composition (basic residues).

This sequence belongs to the universal ribosomal protein uL15 family. In terms of assembly, part of the 50S ribosomal subunit.

Functionally, binds to the 23S rRNA. The sequence is that of Large ribosomal subunit protein uL15 from Wolbachia pipientis wMel.